Here is a 366-residue protein sequence, read N- to C-terminus: Holliday junction branch migration complex subunit RuvB (366 aa).

A disordered region spans residues 1-49; it reads MAIISSKKQPPEPNGQPNKRPESAPSVPKEKVLQPEAAIDEQGKQEESI. Residues 13-210 are large ATPase domain (RuvB-L); that stretch reads PNGQPNKRPE…FGLIQKLRFY (198 aa). ATP contacts are provided by residues Ile-49, Arg-50, Gly-91, Lys-94, Thr-95, Thr-96, 157-159, Arg-200, Tyr-210, and Arg-247; that span reads EDY. A Mg(2+)-binding site is contributed by Thr-95. The small ATPAse domain (RuvB-S) stretch occupies residues 211-281; sequence EVDELSQIVL…IAAEALQLFQ (71 aa). The head domain (RuvB-H) stretch occupies residues 284 to 366; it reads PCGLDWTDRR…TPPNEQLSLL (83 aa). DNA-binding residues include Arg-339 and Arg-344.

The protein belongs to the RuvB family. In terms of assembly, homohexamer. Forms an RuvA(8)-RuvB(12)-Holliday junction (HJ) complex. HJ DNA is sandwiched between 2 RuvA tetramers; dsDNA enters through RuvA and exits via RuvB. An RuvB hexamer assembles on each DNA strand where it exits the tetramer. Each RuvB hexamer is contacted by two RuvA subunits (via domain III) on 2 adjacent RuvB subunits; this complex drives branch migration. In the full resolvosome a probable DNA-RuvA(4)-RuvB(12)-RuvC(2) complex forms which resolves the HJ.

The protein localises to the cytoplasm. It carries out the reaction ATP + H2O = ADP + phosphate + H(+). In terms of biological role, the RuvA-RuvB-RuvC complex processes Holliday junction (HJ) DNA during genetic recombination and DNA repair, while the RuvA-RuvB complex plays an important role in the rescue of blocked DNA replication forks via replication fork reversal (RFR). RuvA specifically binds to HJ cruciform DNA, conferring on it an open structure. The RuvB hexamer acts as an ATP-dependent pump, pulling dsDNA into and through the RuvAB complex. RuvB forms 2 homohexamers on either side of HJ DNA bound by 1 or 2 RuvA tetramers; 4 subunits per hexamer contact DNA at a time. Coordinated motions by a converter formed by DNA-disengaged RuvB subunits stimulates ATP hydrolysis and nucleotide exchange. Immobilization of the converter enables RuvB to convert the ATP-contained energy into a lever motion, pulling 2 nucleotides of DNA out of the RuvA tetramer per ATP hydrolyzed, thus driving DNA branch migration. The RuvB motors rotate together with the DNA substrate, which together with the progressing nucleotide cycle form the mechanistic basis for DNA recombination by continuous HJ branch migration. Branch migration allows RuvC to scan DNA until it finds its consensus sequence, where it cleaves and resolves cruciform DNA. The chain is Holliday junction branch migration complex subunit RuvB from Nostoc sp. (strain PCC 7120 / SAG 25.82 / UTEX 2576).